We begin with the raw amino-acid sequence, 165 residues long: UPF0114 protein in repA1-repA2 intergenic region (165 aa).

3 helical membrane passes run 10-32 (YASRWLMFPVYIGLSLGFILLTL), 53-75 (LVLVVLSLIDISLVGGLLVMVMF), and 134-156 (DQIMWCVLIHLTFVISAFGMACI).

Belongs to the UPF0114 family.

It localises to the cell membrane. This is UPF0114 protein in repA1-repA2 intergenic region from Buchnera aphidicola subsp. Baizongia pistaciae (strain Bp).